We begin with the raw amino-acid sequence, 736 residues long: Catalase-peroxidase (736 aa).

The tryptophyl-tyrosyl-methioninium (Trp-Tyr) (with M-249) cross-link spans 100 to 223; it reads WHSAGTYRIG…LAAVQMGLIY (124 aa). Catalysis depends on His101, which acts as the Proton acceptor. The tryptophyl-tyrosyl-methioninium (Tyr-Met) (with W-100) cross-link spans 223 to 249; it reads YVNPEGPDGKPDPVAAARDIRETFRRM. Heme b is bound at residue His264.

It belongs to the peroxidase family. Peroxidase/catalase subfamily. In terms of assembly, homodimer or homotetramer. It depends on heme b as a cofactor. Formation of the three residue Trp-Tyr-Met cross-link is important for the catalase, but not the peroxidase activity of the enzyme.

It carries out the reaction H2O2 + AH2 = A + 2 H2O. The enzyme catalyses 2 H2O2 = O2 + 2 H2O. Bifunctional enzyme with both catalase and broad-spectrum peroxidase activity. The sequence is that of Catalase-peroxidase from Geobacillus kaustophilus (strain HTA426).